The sequence spans 674 residues: Cysteine-rich receptor-like protein kinase 6 (674 aa).

A signal peptide spans Met-1 to Ala-24. The Extracellular segment spans residues Gln-25–Val-289. Gnk2-homologous domains are found at residues Phe-28–Ile-132 and Asn-139–Phe-245. Asn-36, Asn-43, Asn-61, Asn-70, Asn-104, Asn-178, and Asn-247 each carry an N-linked (GlcNAc...) asparagine glycan. The segment covering Pro-254–Arg-266 has biased composition (pro residues). Positions Pro-254–Ser-284 are disordered. The segment covering Ser-268 to Ser-284 has biased composition (low complexity). Asn-286 is a glycosylation site (N-linked (GlcNAc...) asparagine). The helical transmembrane segment at Leu-290–Phe-310 threads the bilayer. Topologically, residues Leu-311 to Arg-674 are cytoplasmic. The Protein kinase domain maps to Phe-351–Phe-637. ATP is bound by residues Ile-357–Val-365 and Lys-379. The residue at position 424 (Tyr-424) is a Phosphotyrosine. The active-site Proton acceptor is Asp-476. At Ser-480 the chain carries Phosphoserine. The residue at position 516 (Thr-516) is a Phosphothreonine. Tyr-524 carries the post-translational modification Phosphotyrosine. A disordered region spans residues Leu-648–Arg-674. The segment covering Ser-650–Phe-659 has biased composition (polar residues).

The protein belongs to the protein kinase superfamily. Ser/Thr protein kinase family. CRK subfamily.

The protein localises to the membrane. The enzyme catalyses L-seryl-[protein] + ATP = O-phospho-L-seryl-[protein] + ADP + H(+). It catalyses the reaction L-threonyl-[protein] + ATP = O-phospho-L-threonyl-[protein] + ADP + H(+). The protein is Cysteine-rich receptor-like protein kinase 6 (CRK6) of Arabidopsis thaliana (Mouse-ear cress).